The chain runs to 855 residues: Pre-mRNA-splicing factor SYF1 (855 aa).

9 HAT repeats span residues 15–47 (LVFE…FKQG), 48–80 (APKP…ARRA), 90–122 (PAYE…FLMD), 124–158 (GRVT…FLRS), 160–192 (PLPE…SSDR), 198–230 (QRLA…LISQ), 235–268 (VQSL…YYIR), 270–305 (GHFE…FEES), and 369–407 (GRPR…FYED). K420 carries the N6-acetyllysine modification. HAT repeat units lie at residues 498–530 (GTFQ…FLEE), 532–566 (KYFE…KFIS), 571–605 (RKLE…LEEE), 643–677 (YGVT…MECK), and 679–713 (GEID…FEVR). The tract at residues 808–855 (AELAQQANPEEIQLGEDEDEDEMDLEPNEVRLEQQSVPAAVFGSLKED) is disordered. Positions 820-834 (QLGEDEDEDEMDLEP) are enriched in acidic residues. Residue S851 is modified to Phosphoserine.

Belongs to the crooked-neck family. In terms of assembly, associates with RNA polymerase II, the TCR-specific proteins CKN1/CSA and ERCC6/CSB, and XPA. Identified in the spliceosome C complex. Component of the XAB2 complex, a multimeric protein complex composed of XAB2, PRPF19, AQR, ZNF830, ISY1, and PPIE. Identified in a pentameric intron-binding (IB) complex composed of AQR, XAB2, ISY1, ZNF830 and PPIE that is incorporated into the spliceosome as a preassembled complex. The IB complex does not contain PRPF19.

It localises to the nucleus. In terms of biological role, involved in pre-mRNA splicing as component of the spliceosome. Involved in transcription-coupled repair (TCR), transcription and pre-mRNA splicing. The protein is Pre-mRNA-splicing factor SYF1 (Xab2) of Mus musculus (Mouse).